The sequence spans 359 residues: MLAPRLAFVLLLSSYFGSILITSVESSDEVDMEKKTVKMRGSNTSVLVEGDGGKISTLYFEEDDDDDDDEDNEESENEVEDFDDENALSFQVESLQEVDESGKPVKASKSSEIQHSVSSVGSLAFTVSALQNSTTYQNLSAKTVTLQAQLPNMATLELMVVLFLEDGTIKFGNETFKVLSGTMKFNINVTGWQYCDGATVSCLSDSNQPAAVGDNLDLALTVKSEAEDPEEVDDAKRAETGKDPICVDPDDPNEEDDDCPVVYDMGGNSEMVLNKGVLVNNMDYVAMPQGFPNLEKTGMMQKKLTFRLPKTPGSVIIDPSVNIGVPPKKQSGNSGTSIKASSLCFFTLTLLLSVLIAHF.

A signal peptide spans 1 to 26 (MLAPRLAFVLLLSSYFGSILITSVES). 2 disordered regions span residues 60 to 83 (FEED…EDFD) and 224 to 254 (SEAE…DPNE). Positions 66–89 (DDDDEDNEESENEVEDFDDENALS) form a coiled coil.

Component of the acid-insoluble and acid-soluble organic matrix of the aragonitic skeleton (at protein level).

The protein localises to the secreted. The chain is Acidic skeletal organic matrix protein from Acropora millepora (Staghorn coral).